The primary structure comprises 632 residues: Extracellular metalloproteinase 2 (632 aa).

A signal peptide spans 1–19; that stretch reads MHGLLLAGLAAALPLGVAG. A propeptide spanning residues 20 to 244 is cleaved from the precursor; it reads LPARQQSGLS…VHNVVDYVAS (225 aa). Asn270 carries an N-linked (GlcNAc...) asparagine glycan. Zn(2+) is bound at residue His429. The active site involves Glu430. His433 lines the Zn(2+) pocket.

This sequence belongs to the peptidase M36 family. Requires Zn(2+) as cofactor.

It is found in the secreted. Its function is as follows. Secreted metalloproteinase that allows assimilation of proteinaceous substrates and probably acts as a virulence factor. This Arthroderma gypseum (strain ATCC MYA-4604 / CBS 118893) (Microsporum gypseum) protein is Extracellular metalloproteinase 2 (MEP2).